The chain runs to 1369 residues: MAQLTKNFGKIVKTLTIPHLLNLQIDSYELFLQKDIPPTSREDAGLEGVFRSVFPIEDFNRTASLEYVSYEIGEPKYDVPECIAKGLTFEAPLRIKVRLVVYDVDEETENRTIRDIKEQIIYFGTVPLMTEKGTFIINGTERVIVNQLQRSPGIIFEHDSGKSHTSRKVLYSCRIIPMRGSWLDFDYDHKDILYVRIDRRRKMPATILFKAMGMSRADILRYFYEVEHFTFEPHHVFRQVLPDFYRKEKAYSEIRDSEGKVIVAVDKPITKRAWRLMLEAGIEKVEVDPATLLGLFLAEDLADPATGEVMAEAGDELNADLIEKLKDAGIVELSLLHTRGVDTSSSIRDTLALDKTIDTITAQVEIYRRLRPSSPPTPEIAANFFENLFRNPDYYDLSPVGRYKINARLKVDQPLDFRTLANDDILKAVKHLTFLKDSHGPADDIDHLGNRRVRPVGELVENQYRIGLVRMERAIKERMSLQEVATLMPHDLINPKPVAAVLKEFFGTSQLSQFMDQTNPLSEVTHKRRLSALGPGGLTRERAGFEVRDVHTSHYGRICPIETPEGPNIGLIVSLTTHSKVNDFGFIETPYKVVKDGQLTGETIYLDATREIDEVIAGANAPLDENKAFINSMVGARIRGDQVVIPREQVTLMDISPSQIVSVSAALIPFLEHDDANRALMGSNMQRQAVPLLRCEQPLVGTGMEGAVAKDSGSCILAEGEGFVHYADAERIIVCYDDPAVGTDTGSAKTYELLKHHKSNQNTCFGQVPRVLVGQRVVKGDVLADGPGIRDGELALGKNLLVAFMPWCGYNYEDSILISENAVKDDTFTSVHIEEFEVVARDTKLGPEEITRDIPNVGEEMLKDLDDCGIIRIGARVAPDDILVGKITPKGETQLTPEEKLLRAIFGDKARDVKNTSLKVPPGIEGTVIDVRVFNRRSGEKDDRTRQIEDFELARLDTKEGQHAAAIAANVRRRLWPVVSGKTVFQTIKGVKKGEVLLEANHPMTQEVLEALPVKKLSGLFTSKETNEAVAEVLDEYDRHIQFIKGLYDQKREKTTEGDDLPPGVIKMVKVYVAVKRKLNVGDKMAGRHGNKGVVSCILPIEDMPFFSHGRPVDIVLNPLGVPSRMNIGQILETHLGWAGMELGRQLAEMVDSGKAMEGVRDRAKAVFDTEETTALIDGMSDDDLRDALRALKNGIVAKTPVFDGATEDELWSWLKLAGLPEDGKVTLYDGRTGEAFHRPVTVGCMYILKLHHLVDEKIHARSTGPYSLVTQQPLGGKAQFGGQRLGEMEVWALEAYGASYLLQEFLTVKSDDVGGRVKMYEKIVKGDNFLEAGLPESFNVLVKELMSLGLDVDLIQDEKKIAKAPPRR.

Belongs to the RNA polymerase beta chain family. As to quaternary structure, the RNAP catalytic core consists of 2 alpha, 1 beta, 1 beta' and 1 omega subunit. When a sigma factor is associated with the core the holoenzyme is formed, which can initiate transcription.

It catalyses the reaction RNA(n) + a ribonucleoside 5'-triphosphate = RNA(n+1) + diphosphate. Its function is as follows. DNA-dependent RNA polymerase catalyzes the transcription of DNA into RNA using the four ribonucleoside triphosphates as substrates. This Solidesulfovibrio magneticus (strain ATCC 700980 / DSM 13731 / RS-1) (Desulfovibrio magneticus) protein is DNA-directed RNA polymerase subunit beta.